Reading from the N-terminus, the 942-residue chain is MSTDSKRYCIKTKHVAIICAAVVAVGLIVGLSVGLTRSCDSKDGGQGTTQSPSHLPPTSSPPQDQGVCPASEDESGNWRDFRLPDFINPVHYDLQVKPLLEQDTYTGTVNISINVTSPTQHLWLHLRETRITQLPVLWRPSGEQVQVRRCFEYKKQEYVVVEAEEELAPNSGEGLYHLTMEFAGWLNGSLVGFYRTTYVEKGQIKSIAATDHEPTDARKSFPCFDEPNKKATYTISIIHPKEYKALSNMPVEKEESVDDIWTQTTFQKSVPMSTYLVCFAVHQFDSVTRTSRSGKPLTIYVQPEQKHTAEYAANITKSVFDYFEDYFAMEYSLPKLDKIAIPDFGTGAMENWGLITYRETNLLYDPNESASSNQQRVAAVVAHELVHQWFGNIVTMEWWEDLWLNEGFASFFEFLGVDHAEKEWQMRDQILLEDVLPVQEDDSLISSHPIVVTVSTPAEITSVFDGISYSKGASILRMLEDWITPEKFQKGCQEYLKKFEFKNAKTSDFWEALEEASNLPVKEVMDTWTNQMGYPVLNVEDMRIISQKRFLLDPNANSSEPHSVFGYTWNIPVRWTNDNESTITIYNRSETGGITLNSSNPNGNAFLKINPDHIGFYRVNYEVSTWEWIATNLSLNHKDFSTADRASLIDDAFALARAQLLNYKEALNLTKYLKMEDEYLPWQRVISAVTYIISMFEDDKELYPMIEKYFRDQVKPIADSLGWNDNGDHLTKLLRASVLGFACKMGDSNALNNASHLFEQWLTGTVSLPVNLRLLVYRYGMQNSGNETSWNYTLKQYQETSLAQEKEKLLYGLASVKNVALLSRYLDLLKDPNVIKSQDVFTVIRYISYNSYGKTMAWNWIQLNWEYLVNRYTLNDRNLGRIVTIAEPFNTELQLWQMESFFKRYPEAGAGEKPREQVLETVKNNIEWLKQNRDTIRDWFFN.

Topologically, residues 1 to 14 (MSTDSKRYCIKTKH) are cytoplasmic. A helical; Signal-anchor for type II membrane protein transmembrane segment spans residues 15–35 (VAIICAAVVAVGLIVGLSVGL). At 36-942 (TRSCDSKDGG…RDTIRDWFFN (907 aa)) the chain is on the extracellular side. The disordered stretch occupies residues 40–74 (DSKDGGQGTTQSPSHLPPTSSPPQDQGVCPASEDE). Asn-110, Asn-114, and Asn-187 each carry an N-linked (GlcNAc...) asparagine glycan. Position 213 (Glu-213) interacts with substrate. N-linked (GlcNAc...) asparagine glycosylation occurs at Asn-314. Substrate is bound at residue 347-351 (GAMEN). Residue Asn-367 is glycosylated (N-linked (GlcNAc...) asparagine). Zn(2+) is bound at residue His-383. Residue Glu-384 is the Proton acceptor of the active site. Residues His-387 and Glu-406 each contribute to the Zn(2+) site. Residues Asn-557, Asn-579, Asn-587, Asn-597, Asn-632, Asn-668, Asn-753, Asn-786, and Asn-791 are each glycosylated (N-linked (GlcNAc...) asparagine). Residue Arg-877 participates in substrate binding.

The protein belongs to the peptidase M1 family. Homodimer; disulfide-linked. It depends on Zn(2+) as a cofactor.

It localises to the cell membrane. It carries out the reaction Release of N-terminal glutamate (and to a lesser extent aspartate) from a peptide.. Substrate specificity is modulated by calcium which enhances the enzymatic activity for cleavage of acidic residues while reducing its activity with basic residues. Inhibited by aminopeptidase inhibitors amastatin and bestatin. Functionally, regulates central hypertension through its calcium-modulated preference to cleave N-terminal acidic residues from peptides such as angiotensin II. The protein is Glutamyl aminopeptidase (ENPEP) of Sus scrofa (Pig).